The primary structure comprises 446 residues: Chromosomal replication initiator protein DnaA (446 aa).

Residues 1-72 (MENILDLWNK…ADTIYELTGE (72 aa)) are domain I, interacts with DnaA modulators. The domain II stretch occupies residues 72–109 (EELSIKFIIPQNQDEVEAMPKSPIKKMSKEDPVDIPQN). Residues 110–326 (MLNPKYTFDT…GALIRVVAYS (217 aa)) form a domain III, AAA+ region region. ATP contacts are provided by glycine 154, glycine 156, lysine 157, and threonine 158. Residues 327–446 (SLINKDINAD…HVKEIKEQLK (120 aa)) are domain IV, binds dsDNA.

The protein belongs to the DnaA family. In terms of assembly, oligomerizes as a right-handed, spiral filament on DNA at oriC.

Its subcellular location is the cytoplasm. In terms of biological role, plays an essential role in the initiation and regulation of chromosomal replication. ATP-DnaA binds to the origin of replication (oriC) to initiate formation of the DNA replication initiation complex once per cell cycle. Binds the DnaA box (a 9 base pair repeat at the origin) and separates the double-stranded (ds)DNA. Forms a right-handed helical filament on oriC DNA; dsDNA binds to the exterior of the filament while single-stranded (ss)DNA is stabiized in the filament's interior. The ATP-DnaA-oriC complex binds and stabilizes one strand of the AT-rich DNA unwinding element (DUE), permitting loading of DNA polymerase. After initiation quickly degrades to an ADP-DnaA complex that is not apt for DNA replication. Binds acidic phospholipids. In Bacillus pumilus (strain SAFR-032), this protein is Chromosomal replication initiator protein DnaA.